A 547-amino-acid chain; its full sequence is Smu-2 suppressor of mec-8 and unc-52 protein (547 aa).

5 disordered regions span residues 18–125 (TSAR…AQDQ), 164–202 (IDKS…AQEL), 288–459 (AEPK…AGPK), 496–515 (NGEG…AKRL), and 524–547 (KIMD…KPKY). The segment covering 34–44 (ADPKTGDDKPA) has biased composition (basic and acidic residues). The segment covering 45 to 58 (SFKHKHLKPAKFKK) has biased composition (basic residues). Residues 66 to 94 (KAKKEKTEADEDEAALKNILKNYRDRAAE) are a coiled coil. The span at 87–106 (NYRDRAAERRKQGDEKEDPS) shows a compositional bias: basic and acidic residues. A required and sufficient for interaction with smu-1 region spans residues 163–223 (EIDKSDDDDD…SLHRVLFKNE (61 aa)). Residues 166-178 (KSDDDDDDDIDTA) show a composition bias toward acidic residues. Low complexity-rich tracts occupy residues 185 to 196 (SSSSSSKPSEAS) and 307 to 317 (APGAAAAAPGA). Residues 330 to 423 (VPSRKSRDSR…EREKKRKELE (94 aa)) show a composition bias toward basic and acidic residues. Repeat copies occupy residues 336–337 (RD), 339–340 (RD), 348–349 (RD), 350–351 (RS), 352–353 (RD), 354–355 (RS), 356–357 (RD), 358–359 (RD), 360–361 (RD), 362–363 (RD), 364–365 (RD), and 367–368 (RD). Residues 336–368 (RDSRDAGRRGSRRDRSRDRSRDRDRDRDRDNRD) form a 12 X 2 AA repeats of R-[DS] region. Residues 371–427 (FEKSANSRREEEQNRREQQRERERAEQERRREREKEREQEKAKEREKKRKELEESSG) adopt a coiled-coil conformation.

It belongs to the RED family. In terms of assembly, probable component of the spliceosome. Heterotetramer with smu-1. The smu-1 homodimer interacts (via the N-terminal region including the LisH and CTLH domains) with smu-2, giving rise to a heterotetramer. In terms of tissue distribution, ubiquitous.

The protein localises to the nucleus. Functionally, auxiliary spliceosomal protein that regulates selection of alternative splice sites in a small set of target pre-mRNA species. Selectively regulates alternative splicing of unc-52 exon 17. Thus, smu-2 mutants selectively suppress the effects of unc-52 nonsense mutations in exon 17 by promoting the accumulation of unc-52 isoforms that lack exon 17. In contrast, smu-2 mutants do not suppress the effects of an unc-52 mutation that affects the 5' splice site of exon 16. Required for normal accumulation of smu-1. The polypeptide is Smu-2 suppressor of mec-8 and unc-52 protein (Caenorhabditis elegans).